The primary structure comprises 474 residues: tRNA-2-methylthio-N(6)-dimethylallyladenosine synthase (474 aa).

Positions 3–120 (KKLHIKTWGC…LPEMIEQIQQ (118 aa)) constitute an MTTase N-terminal domain. Cys-12, Cys-49, Cys-83, Cys-157, Cys-161, and Cys-164 together coordinate [4Fe-4S] cluster. The Radical SAM core domain occupies 143 to 375 (RAEGPSAFVS…QDRITQQAMR (233 aa)). The 64-residue stretch at 378 to 441 (RQMLGTVQRI…TNSLRGKFIR (64 aa)) folds into the TRAM domain.

This sequence belongs to the methylthiotransferase family. MiaB subfamily. As to quaternary structure, monomer. [4Fe-4S] cluster serves as cofactor.

The protein localises to the cytoplasm. The enzyme catalyses N(6)-dimethylallyladenosine(37) in tRNA + (sulfur carrier)-SH + AH2 + 2 S-adenosyl-L-methionine = 2-methylsulfanyl-N(6)-dimethylallyladenosine(37) in tRNA + (sulfur carrier)-H + 5'-deoxyadenosine + L-methionine + A + S-adenosyl-L-homocysteine + 2 H(+). Catalyzes the methylthiolation of N6-(dimethylallyl)adenosine (i(6)A), leading to the formation of 2-methylthio-N6-(dimethylallyl)adenosine (ms(2)i(6)A) at position 37 in tRNAs that read codons beginning with uridine. The chain is tRNA-2-methylthio-N(6)-dimethylallyladenosine synthase from Shewanella loihica (strain ATCC BAA-1088 / PV-4).